The primary structure comprises 155 residues: RNA pyrophosphohydrolase (155 aa).

One can recognise a Nudix hydrolase domain in the interval 5-147 (RYRPNVAAIV…KRPVYKKVLE (143 aa)). The Nudix box signature appears at 42–63 (GGIDKGESPKEALLRELKEEIG).

This sequence belongs to the Nudix hydrolase family. RppH subfamily. It depends on a divalent metal cation as a cofactor.

In terms of biological role, accelerates the degradation of transcripts by removing pyrophosphate from the 5'-end of triphosphorylated RNA, leading to a more labile monophosphorylated state that can stimulate subsequent ribonuclease cleavage. This chain is RNA pyrophosphohydrolase, found in Nitratiruptor sp. (strain SB155-2).